The following is a 302-amino-acid chain: Paired immunoglobulin-like type 2 receptor alpha (302 aa).

Residues 1–31 (MALLISLPGGTPAMAQILLLLSSACLHAGNS) form the signal peptide. Residues 32-198 (ERSNRKNGFG…GGLDLQTTVG (167 aa)) are Extracellular-facing. Residues Asn90 and Asn107 are each glycosylated (N-linked (GlcNAc...) asparagine). A helical transmembrane segment spans residues 199-219 (LATAAAVFLVGVLGLIVFLWW). Over 220–302 (KRRRQGQKTK…ETVYSIVKAK (83 aa)) the chain is Cytoplasmic. Residues 228–248 (TKAEIPAREPLETSEKHESVG) are compositionally biased toward basic and acidic residues. The tract at residues 228–293 (TKAEIPAREP…LPVHGNPQEE (66 aa)) is disordered. 2 consecutive short sequence motifs (ITIM motif) follow at residues 265–270 (IVYASI) and 294–299 (TVYSIV). A compositionally biased stretch (polar residues) spans 270–280 (ISLSSPTSPGT).

In terms of assembly, interacts with CD99. Phosphorylated on tyrosine residues.

The protein resides in the membrane. In terms of biological role, paired receptors consist of highly related activating and inhibitory receptors and are widely involved in the regulation of the immune system. Receptor for CD99 and PIANP. The protein is Paired immunoglobulin-like type 2 receptor alpha (Pilra) of Mus musculus (Mouse).